Here is a 121-residue protein sequence, read N- to C-terminus: Large ribosomal subunit protein uL18 (121 aa).

It belongs to the universal ribosomal protein uL18 family. Part of the 50S ribosomal subunit; part of the 5S rRNA/L5/L18/L25 subcomplex. Contacts the 5S and 23S rRNAs.

This is one of the proteins that bind and probably mediate the attachment of the 5S RNA into the large ribosomal subunit, where it forms part of the central protuberance. The polypeptide is Large ribosomal subunit protein uL18 (Caldanaerobacter subterraneus subsp. tengcongensis (strain DSM 15242 / JCM 11007 / NBRC 100824 / MB4) (Thermoanaerobacter tengcongensis)).